The primary structure comprises 1451 residues: Murinoglobulin-2 (1451 aa).

An N-terminal signal peptide occupies residues 1-27; it reads MWKSRRAQLCLFSVLLAFLPSASSLNG. Disulfide bonds link Cys48–Cys86, Cys251–Cys276, and Cys269–Cys288. N-linked (GlcNAc...) asparagine glycosylation occurs at Asn55. Residues Asn294, Asn313, and Asn500 are each glycosylated (N-linked (GlcNAc...) asparagine). Cystine bridges form between Cys461–Cys555, Cys587–Cys773, and Cys634–Cys680. The segment at 677–734 is bait region; sequence PKICFDSAPMSGPRGKFDLAFSSEVSGTLQKGSSKRPQPEEPPREDPPPKDPLAETIR. The segment at 703 to 728 is disordered; the sequence is GTLQKGSSKRPQPEEPPREDPPPKDP. A compositionally biased stretch (basic and acidic residues) spans 713–728; sequence PQPEEPPREDPPPKDP. N-linked (GlcNAc...) asparagine glycosylation is found at Asn749, Asn776, and Asn871. Cystine bridges form between Cys849/Cys885, Cys923/Cys1274, Cys1081/Cys1104, and Cys1298/Cys1444. A cross-link (isoglutamyl cysteine thioester (Cys-Gln)) is located at residues 974 to 977; that stretch reads CGEQ. The N-linked (GlcNAc...) asparagine glycan is linked to Asn1401.

The protein belongs to the protease inhibitor I39 (alpha-2-macroglobulin) family. As to quaternary structure, monomer. Plasma.

The protein localises to the secreted. Its function is as follows. A proteinase activates the inhibitor by specific proteolysis in the bait region, which, by an unknown mechanism leads to reaction at the cysteinyl-glutamyl internal thiol ester site and to a conformational change, whereby the proteinase is trapped and/or covalently bound to the inhibitor. While in the tetrameric proteinase inhibitors steric inhibition is sufficiently strong, monomeric forms need a covalent linkage between the activated glutamyl residue of the original thiol ester and a terminal amino group of a lysine or another nucleophilic group on the proteinase, for inhibition to be effective. The protein is Murinoglobulin-2 (Mug2) of Mus musculus (Mouse).